Reading from the N-terminus, the 758-residue chain is Vitamin K-dependent gamma-carboxylase (758 aa).

The interval 1–31 (MAVSARSARSPPDSDKVQKDKAGQTSGRRQG) is disordered. An N-acetylalanine modification is found at Ala2. Topologically, residues 2-60 (AVSARSARSPPDSDKVQKDKAGQTSGRRQGSRMGKLLGFEWTDVSSWGKLVTLLNRPTD) are cytoplasmic. A compositionally biased stretch (basic and acidic residues) spans 12 to 22 (PDSDKVQKDKA). Residues 61–81 (PASLAVFRFLFGLMMVLDIPQ) traverse the membrane as a helical segment. Over 82–113 (ERGLSSLDRRYLDGLEVCRFPLLDALQPLPLD) the chain is Lumenal. Cys99 and Cys450 form a disulfide bridge. The chain crosses the membrane as a helical span at residues 114 to 134 (WMYLVYTIMFLGALGMMLGLR). The Cytoplasmic portion of the chain corresponds to 135 to 136 (YR). Residues 137-157 (ISCVLFLLPYWYVFLLDKTSW) traverse the membrane as a helical segment. The Lumenal portion of the chain corresponds to 158–292 (NNHSYLYGLL…VSYFHCMNSQ (135 aa)). The chain crosses the membrane as a helical span at residues 293–313 (LFSIGMFPYVMLASSPLFCSP). At 314–361 (EWPRKLVAHCPKRLQELLPLRTAPQPSASCVYKRSRAKGGQKPGLRHR) the chain is on the cytoplasmic side. A helical transmembrane segment spans residues 362-382 (LGAAFTLLYLLEQLFLPYSHF). Residues 383–758 (LTQGYNNWTN…PNADAVHSEF (376 aa)) are Lumenal-facing. The disordered stretch occupies residues 727-758 (PFEPVGEPSPSNTDSSNPNPSEPNADAVHSEF). Residues 734-750 (PSPSNTDSSNPNPSEPN) show a composition bias toward low complexity.

It belongs to the vitamin K-dependent gamma-carboxylase family. As to quaternary structure, monomer. May interact with CALU.

The protein localises to the endoplasmic reticulum membrane. It carries out the reaction 4-carboxy-L-glutamyl-[protein] + 2,3-epoxyphylloquinone + H2O + H(+) = phylloquinol + L-glutamyl-[protein] + CO2 + O2. Its function is as follows. Mediates the vitamin K-dependent carboxylation of glutamate residues to calcium-binding gamma-carboxyglutamate (Gla) residues with the concomitant conversion of the reduced hydroquinone form of vitamin K to vitamin K epoxide. Catalyzes gamma-carboxylation of various proteins, such as blood coagulation factors (F2, F7, F9 and F10), osteocalcin (BGLAP) or matrix Gla protein (MGP). In Delphinapterus leucas (Beluga whale), this protein is Vitamin K-dependent gamma-carboxylase (GGCX).